A 71-amino-acid chain; its full sequence is MPSVKVRENEPFEFALRRFKRTCEKAGVLAETRKREFYEKPTQERKRKAAAAVKRQLRRSSRDVTKRQRLY.

A disordered region spans residues 39 to 71; that stretch reads EKPTQERKRKAAAAVKRQLRRSSRDVTKRQRLY. A compositionally biased stretch (basic residues) spans 45-59; it reads RKRKAAAAVKRQLRR. A compositionally biased stretch (basic and acidic residues) spans 60–71; that stretch reads SSRDVTKRQRLY.

Belongs to the bacterial ribosomal protein bS21 family.

This chain is Small ribosomal subunit protein bS21, found in Stenotrophomonas maltophilia (strain K279a).